The sequence spans 159 residues: Ribosome maturation factor RimP (159 aa).

This sequence belongs to the RimP family.

The protein localises to the cytoplasm. In terms of biological role, required for maturation of 30S ribosomal subunits. The protein is Ribosome maturation factor RimP of Lacticaseibacillus casei (strain BL23) (Lactobacillus casei).